The sequence spans 335 residues: Phenylalanine--tRNA ligase alpha subunit (335 aa).

Glu-262 serves as a coordination point for Mg(2+).

This sequence belongs to the class-II aminoacyl-tRNA synthetase family. Phe-tRNA synthetase alpha subunit type 1 subfamily. Tetramer of two alpha and two beta subunits. It depends on Mg(2+) as a cofactor.

It is found in the cytoplasm. It carries out the reaction tRNA(Phe) + L-phenylalanine + ATP = L-phenylalanyl-tRNA(Phe) + AMP + diphosphate + H(+). The protein is Phenylalanine--tRNA ligase alpha subunit of Prochlorococcus marinus (strain MIT 9313).